The following is a 37-amino-acid chain: Large ribosomal subunit protein bL36 (37 aa).

It belongs to the bacterial ribosomal protein bL36 family.

The sequence is that of Large ribosomal subunit protein bL36 from Persephonella marina (strain DSM 14350 / EX-H1).